The sequence spans 116 residues: U11-theraphotoxin-Hhn1c (116 aa).

Residues 1-21 (MNTVRVTFLLVFVLAVSLGQA) form the signal peptide. Residues 22–74 (DKDENRMEMQEKTEQGKSYLDFAENLLLQKLEELEAKLLEEDSEESRNSRQKR) constitute a propeptide that is removed on maturation. Positions 61-83 (EEDSEESRNSRQKRCIGEGVPCD) are disordered. 3 disulfides stabilise this stretch: C75-C90, C82-C95, and C89-C110.

This sequence belongs to the neurotoxin 14 (magi-1) family. 01 (HNTX-16) subfamily. As to expression, expressed by the venom gland.

It is found in the secreted. In terms of biological role, probable ion channel inhibitor. In Cyriopagopus hainanus (Chinese bird spider), this protein is U11-theraphotoxin-Hhn1c.